The sequence spans 112 residues: Nitrogenase-stabilizing/protective protein NifW (112 aa).

It belongs to the NifW family. Homotrimer; associates with NifD.

Its function is as follows. May protect the nitrogenase Fe-Mo protein from oxidative damage. In Burkholderia vietnamiensis (strain G4 / LMG 22486) (Burkholderia cepacia (strain R1808)), this protein is Nitrogenase-stabilizing/protective protein NifW.